The primary structure comprises 696 residues: Probable glutamine--fructose-6-phosphate aminotransferase [isomerizing] (696 aa).

Catalysis depends on cysteine 2, which acts as the For GATase activity. The Glutamine amidotransferase type-2 domain maps to 2-303 (CGIFGYINYL…DDDIAHVRDG (302 aa)). 2 consecutive SIS domains span residues 375–514 (YYDI…DSVS) and 547–686 (AIEQ…VDQP).

It carries out the reaction D-fructose 6-phosphate + L-glutamine = D-glucosamine 6-phosphate + L-glutamate. Its pathway is nucleotide-sugar biosynthesis; UDP-N-acetyl-alpha-D-glucosamine biosynthesis; alpha-D-glucosamine 6-phosphate from D-fructose 6-phosphate: step 1/1. Functionally, involved in amino sugar synthesis (formation of chitin, supplies the amino sugars of asparagine-linked oligosaccharides of glycoproteins). In Schizosaccharomyces pombe (strain 972 / ATCC 24843) (Fission yeast), this protein is Probable glutamine--fructose-6-phosphate aminotransferase [isomerizing].